The chain runs to 99 residues: Large ribosomal subunit protein uL23 (99 aa).

This sequence belongs to the universal ribosomal protein uL23 family. Part of the 50S ribosomal subunit. Contacts protein L29, and trigger factor when it is bound to the ribosome.

One of the early assembly proteins it binds 23S rRNA. One of the proteins that surrounds the polypeptide exit tunnel on the outside of the ribosome. Forms the main docking site for trigger factor binding to the ribosome. This is Large ribosomal subunit protein uL23 from Hydrogenobaculum sp. (strain Y04AAS1).